The sequence spans 587 residues: Monocopper oxidase-like protein SKU5 (587 aa).

Residues 1–20 (MDLFKILLLVFFVNISFCFA) form the signal peptide. Asn14 and Asn58 each carry an N-linked (GlcNAc...) asparagine glycan. A Cu cation-binding site is contributed by His80. N-linked (GlcNAc...) asparagine glycans are attached at residues Asn107, Asn169, Asn200, Asn257, Asn278, Asn293, Asn342, Asn362, Asn430, and Asn444. His452 is a Cu cation binding site. An N-linked (GlcNAc...) asparagine glycan is attached at Asn534. A lipid anchor (GPI-anchor amidated serine) is attached at Ser562. Residues 563-587 (ASKSIGFTSLSMVVMALVMMMMLQH) constitute a propeptide, removed in mature form.

The protein belongs to the multicopper oxidase family. Requires Cu cation as cofactor. As to expression, expressed in roots, hypocotyls, cotyledons, leaves, stems and flowers.

Its subcellular location is the secreted. The protein resides in the cell wall. It is found in the cell membrane. Functionally, may be a monocopper oxidase of unknown specificity. Involved in directional growth processes, possibly by participating in cell wall expansion. The protein is Monocopper oxidase-like protein SKU5 (SKU5) of Arabidopsis thaliana (Mouse-ear cress).